Consider the following 672-residue polypeptide: UvrABC system protein B (672 aa).

The Helicase ATP-binding domain maps to 26–183 (EGLEDGLAHQ…RRLSELQYVR (158 aa)). Residue 39-46 (GVTGSGKT) participates in ATP binding. Positions 92–115 (YYDYYQPEAYVPSSDTFIEKDASV) match the Beta-hairpin motif. A Helicase C-terminal domain is found at 431 to 597 (QVDDLLSEIN…ALNKKVTDIL (167 aa)). The segment at 601 to 623 (DGPVRSRTKGARGQRAAEPHPDY) is disordered. Positions 632 to 667 (EQQIQRLETQMYQHAQNLEFEQAAALRDEIHILREQ) constitute a UVR domain.

The protein belongs to the UvrB family. In terms of assembly, forms a heterotetramer with UvrA during the search for lesions. Interacts with UvrC in an incision complex.

It is found in the cytoplasm. Functionally, the UvrABC repair system catalyzes the recognition and processing of DNA lesions. A damage recognition complex composed of 2 UvrA and 2 UvrB subunits scans DNA for abnormalities. Upon binding of the UvrA(2)B(2) complex to a putative damaged site, the DNA wraps around one UvrB monomer. DNA wrap is dependent on ATP binding by UvrB and probably causes local melting of the DNA helix, facilitating insertion of UvrB beta-hairpin between the DNA strands. Then UvrB probes one DNA strand for the presence of a lesion. If a lesion is found the UvrA subunits dissociate and the UvrB-DNA preincision complex is formed. This complex is subsequently bound by UvrC and the second UvrB is released. If no lesion is found, the DNA wraps around the other UvrB subunit that will check the other stand for damage. The protein is UvrABC system protein B of Edwardsiella ictaluri (strain 93-146).